We begin with the raw amino-acid sequence, 158 residues long: NADH-quinone oxidoreductase subunit B (158 aa).

4 residues coordinate [4Fe-4S] cluster: Cys-36, Cys-37, Cys-101, and Cys-131.

This sequence belongs to the complex I 20 kDa subunit family. NDH-1 is composed of 14 different subunits. Subunits NuoB, C, D, E, F, and G constitute the peripheral sector of the complex. Requires [4Fe-4S] cluster as cofactor.

The protein resides in the cell inner membrane. It catalyses the reaction a quinone + NADH + 5 H(+)(in) = a quinol + NAD(+) + 4 H(+)(out). Functionally, NDH-1 shuttles electrons from NADH, via FMN and iron-sulfur (Fe-S) centers, to quinones in the respiratory chain. The immediate electron acceptor for the enzyme in this species is believed to be ubiquinone. Couples the redox reaction to proton translocation (for every two electrons transferred, four hydrogen ions are translocated across the cytoplasmic membrane), and thus conserves the redox energy in a proton gradient. This chain is NADH-quinone oxidoreductase subunit B, found in Francisella tularensis subsp. tularensis (strain FSC 198).